The primary structure comprises 472 residues: Glutamine synthetase (472 aa).

One can recognise a GS beta-grasp domain in the interval 13-101; the sequence is SKARFVDLRF…TCDVIDPADG (89 aa). In terms of domain architecture, GS catalytic spans 108–472; the sequence is PRSIARRAEA…PLEFEMYYSL (365 aa). Residues Glu-133 and Glu-135 each contribute to the Mg(2+) site. Glu-211 contributes to the ATP binding site. Mg(2+)-binding residues include Glu-216 and Glu-224. L-glutamate contacts are provided by residues 268-269 and Gly-269; that span reads NG. His-273 contributes to the Mg(2+) binding site. Residues 275–277 and Ser-277 contribute to the ATP site; that span reads HQS. L-glutamate is bound by residues Arg-325, Glu-331, and Arg-343. ATP-binding residues include Arg-343, Arg-348, and Lys-356. Glu-361 provides a ligand contact to Mg(2+). Arg-363 provides a ligand contact to L-glutamate. Tyr-401 is subject to O-AMP-tyrosine.

The protein belongs to the glutamine synthetase family. Oligomer of 12 subunits arranged in the form of two hexameric ring. Mg(2+) is required as a cofactor.

It localises to the cytoplasm. The catalysed reaction is L-glutamate + NH4(+) + ATP = L-glutamine + ADP + phosphate + H(+). With respect to regulation, the activity of this enzyme could be controlled by adenylation under conditions of abundant glutamine. Its function is as follows. Catalyzes the ATP-dependent biosynthesis of glutamine from glutamate and ammonia. The chain is Glutamine synthetase from Neisseria gonorrhoeae.